The primary structure comprises 61 residues: Sec-independent protein translocase protein TatA (61 aa).

A helical transmembrane segment spans residues 1–21 (MFGLGITEILLILGIIILIFG).

It belongs to the TatA/E family. As to quaternary structure, the Tat system comprises two distinct complexes: a TatABC complex, containing multiple copies of TatA, TatB and TatC subunits, and a separate TatA complex, containing only TatA subunits. Substrates initially bind to the TatABC complex, which probably triggers association of the separate TatA complex to form the active translocon.

The protein resides in the cell inner membrane. Functionally, part of the twin-arginine translocation (Tat) system that transports large folded proteins containing a characteristic twin-arginine motif in their signal peptide across membranes. TatA could form the protein-conducting channel of the Tat system. In Maridesulfovibrio salexigens (strain ATCC 14822 / DSM 2638 / NCIMB 8403 / VKM B-1763) (Desulfovibrio salexigens), this protein is Sec-independent protein translocase protein TatA.